Consider the following 267-residue polypeptide: tRNA pseudouridine synthase A (267 aa).

Aspartate 51 functions as the Nucleophile in the catalytic mechanism. Residue tyrosine 109 participates in substrate binding.

It belongs to the tRNA pseudouridine synthase TruA family. Homodimer.

It catalyses the reaction uridine(38/39/40) in tRNA = pseudouridine(38/39/40) in tRNA. Formation of pseudouridine at positions 38, 39 and 40 in the anticodon stem and loop of transfer RNAs. This chain is tRNA pseudouridine synthase A, found in Staphylococcus epidermidis (strain ATCC 35984 / DSM 28319 / BCRC 17069 / CCUG 31568 / BM 3577 / RP62A).